A 374-amino-acid polypeptide reads, in one-letter code: Envelope glycoprotein M (374 aa).

Over 1 to 16 (MKSSKKDIFILHIWLK) the chain is Intravirion. A helical transmembrane segment spans residues 17–37 (LMGCYVFMFITSVVLPIAAMF). Residues 38-82 (PNLGFPCYYNTLVDYSKLNLREKNQAQHLTPTLFLEAPEMFFYVT) lie on the Virion surface side of the membrane. A helical transmembrane segment spans residues 83–103 (YSFIVDCCSLVYYALAAVAVV). Residues 104–117 (KAKKHAPGLMALSQ) are Intravirion-facing. A helical transmembrane segment spans residues 118 to 138 (WIMAVGSPTLLYMAVLKLWTI). Residues 139 to 149 (QLYIHTLSYKH) lie on the Virion surface side of the membrane. A helical membrane pass occupies residues 150-170 (IYLAAFVYCLHWLLSMVYTEC). Residues 171–207 (YITNVSSQWTSSELKKTIPENILLYRVVHVLKPIMMN) lie on the Intravirion side of the membrane. Residues 208 to 228 (VHLSVVALETLIFCLSFMMAI) form a helical membrane-spanning segment. The Virion surface segment spans residues 229 to 238 (GNSFYVMVSD). The chain crosses the membrane as a helical span at residues 239–259 (IVFGAINLYLILPIIWYFVTE). Topologically, residues 260–269 (FWLSKYLPRQ) are intravirion. A helical transmembrane segment spans residues 270-290 (FGFYFGVLVASIILILPVVRY). Residues 291 to 301 (DKIFVAAQIHR) are Virion surface-facing. Residues 302–322 (AVSINIAMIPLCALVALLVRA) traverse the membrane as a helical segment. The Intravirion segment spans residues 323-374 (CRVYTDRKKIAYTALPSKPQTIKYTKPIEPSTKQAPDSSIFLEEESDTDFEQ). The segment at 345-374 (KYTKPIEPSTKQAPDSSIFLEEESDTDFEQ) is disordered. Over residues 364 to 374 (LEEESDTDFEQ) the composition is skewed to acidic residues.

The protein belongs to the herpesviridae glycoprotein M family. Interacts (via N-terminus) with gN (via N-terminus). The gM-gN heterodimer forms the gCII complex.

Its subcellular location is the virion membrane. It localises to the host Golgi apparatus. The protein resides in the host trans-Golgi network. The protein localises to the host endosome membrane. It is found in the host nucleus inner membrane. Envelope glycoprotein important for virion assembly and egress. Plays a role in the correct incorporation of gH-gL into virion membrane. Directs the glycoprotein N (gN) to the host trans-Golgi network. In Connochaetes taurinus (Blue wildebeest), this protein is Envelope glycoprotein M.